We begin with the raw amino-acid sequence, 929 residues long: MKLKETLNLGKTSFPMRAGLPNKEPIWQKEWEEAKVYQRRQELNQGKPHFTLHDGPPYANGNIHVGHAMNKISKDIIVRSKSMSGFYAPFIPGWDTHGLPIEQVLAKQGVKRKELDRAEYLKMCRDYALSQVDKQREDFKRLGVSADWENPYVTLTPDYEAAQIRVFGEMAKKGYIYQGAKPVYWSWSSESALAEAEIEYHDLVSTSLYYANKVKDGKGVLDTDTYIVVWTTTPFTVTASRGLTVGADIEYVLVKPAGETRKFIVASELLNSLSEKFAWEEVEVLNTYRGDELNQIVTEHPWDSEVDELVILGEHVTTDSGTGIVHTAPGFGEDDYNVGVANGLEVVVTVNERGIMMENAGPDFAGKFYDKVAPIVMEKLGDLLLAKEEISHSYPFDWRTKKPIIWRAVPQWFASVSKFRQEILDEIEKVKFHSEWGKVRLYNMIRDRGDWVISRQRAWGVPLPIFYAEDRTPIMTEETIEHVAKLFEEHGSVIWWERDAKDLLPEGFTHPGSPNGEFTKENDIMDVWFDSGSSWNGVVVNRPELTYPADLYLEGSDQYRGWFNSSLITSVANHGVAPYKQLLSQGFALDGKGEKMSKSLGNTIAPSDVEKQFGAEILRLWVTSVDTSNDVRISMDILSQVSESYRKIRNTLRFLIANTSDFNPTTDAVAFEDLRSVDQYMTIRFNQLVKNIRDAYENFEFLTIYKSLVNFINVELSAFYLDFAKDVVYIESAKSLERRQMQTVFYDILVKITKLLTPILPHTAEEIWSYLEFENEDYVQLSELPEAEDFANQDALLEKWNAFMDFRGKAQKALEEARNEKVIGKSLEAHLTIYPDAEVKELLESLNTNLAQLLIVSALTIAEGDVPESAVRFQGVSFTVERAEGEVCDRCRRIDPTTKERSYNATICNHCASIIEENFAEVVAEGFEV.

The short motif at 57–67 is the 'HIGH' region element; that stretch reads PYANGNIHVGH. Glu554 is an L-isoleucyl-5'-AMP binding site. The 'KMSKS' region signature appears at 595 to 599; sequence KMSKS. Residue Lys598 coordinates ATP. Residues Cys888, Cys891, Cys908, and Cys911 each coordinate Zn(2+).

This sequence belongs to the class-I aminoacyl-tRNA synthetase family. IleS type 1 subfamily. Monomer. It depends on Zn(2+) as a cofactor.

The protein localises to the cytoplasm. It carries out the reaction tRNA(Ile) + L-isoleucine + ATP = L-isoleucyl-tRNA(Ile) + AMP + diphosphate. Functionally, catalyzes the attachment of isoleucine to tRNA(Ile). As IleRS can inadvertently accommodate and process structurally similar amino acids such as valine, to avoid such errors it has two additional distinct tRNA(Ile)-dependent editing activities. One activity is designated as 'pretransfer' editing and involves the hydrolysis of activated Val-AMP. The other activity is designated 'posttransfer' editing and involves deacylation of mischarged Val-tRNA(Ile). In Streptococcus thermophilus (strain CNRZ 1066), this protein is Isoleucine--tRNA ligase.